The sequence spans 712 residues: tRNA 5-methylaminomethyl-2-thiouridine biosynthesis bifunctional protein MnmC (712 aa).

A tRNA (mnm(5)s(2)U34)-methyltransferase region spans residues 1–268; it reads MPNMRHRVNS…RRALRHAQSD (268 aa). The tract at residues 292–712 is FAD-dependent cmnm(5)s(2)U34 oxidoreductase; that stretch reads IGGGVASTHL…MRKLIKGKAL (421 aa).

The protein in the N-terminal section; belongs to the methyltransferase superfamily. tRNA (mnm(5)s(2)U34)-methyltransferase family. In the C-terminal section; belongs to the DAO family. FAD is required as a cofactor.

It localises to the cytoplasm. It catalyses the reaction 5-aminomethyl-2-thiouridine(34) in tRNA + S-adenosyl-L-methionine = 5-methylaminomethyl-2-thiouridine(34) in tRNA + S-adenosyl-L-homocysteine + H(+). Catalyzes the last two steps in the biosynthesis of 5-methylaminomethyl-2-thiouridine (mnm(5)s(2)U) at the wobble position (U34) in tRNA. Catalyzes the FAD-dependent demodification of cmnm(5)s(2)U34 to nm(5)s(2)U34, followed by the transfer of a methyl group from S-adenosyl-L-methionine to nm(5)s(2)U34, to form mnm(5)s(2)U34. In Shewanella sediminis (strain HAW-EB3), this protein is tRNA 5-methylaminomethyl-2-thiouridine biosynthesis bifunctional protein MnmC.